The sequence spans 174 residues: Endoribonuclease YbeY (174 aa).

His129, His133, and His139 together coordinate Zn(2+).

It belongs to the endoribonuclease YbeY family. The cofactor is Zn(2+).

The protein resides in the cytoplasm. In terms of biological role, single strand-specific metallo-endoribonuclease involved in late-stage 70S ribosome quality control and in maturation of the 3' terminus of the 16S rRNA. The sequence is that of Endoribonuclease YbeY from Lactobacillus helveticus (strain DPC 4571).